The following is a 496-amino-acid chain: Probable CtpA-like serine protease (496 aa).

Over residues 1–16 (MDDKQHTSSSDDERAE) the composition is skewed to basic and acidic residues. Residues 1 to 27 (MDDKQHTSSSDDERAEIATSNQDQETN) form a disordered region. Over residues 18–27 (ATSNQDQETN) the composition is skewed to polar residues. A helical membrane pass occupies residues 39–59 (FISILIGTTLITAVITVVAYI). In terms of domain architecture, PDZ spans 124 to 206 (TKSFNEGVSG…TEVTLTVQRG (83 aa)). Active-site charge relay system residues include Ser-329, Asp-340, and Lys-354.

It belongs to the peptidase S41A family.

The protein resides in the cell membrane. The chain is Probable CtpA-like serine protease from Staphylococcus aureus (strain Mu50 / ATCC 700699).